The primary structure comprises 78 residues: MSDILERVRKIVIEHLDADPEKVTEKASFIDDLGADSLDNVELVMAFEEEFDIEIPDDAAEHIQTVGDAVKFITEKTA.

Positions 2–77 (SDILERVRKI…DAVKFITEKT (76 aa)) constitute a Carrier domain. An O-(pantetheine 4'-phosphoryl)serine modification is found at serine 37.

It belongs to the acyl carrier protein (ACP) family. Post-translationally, 4'-phosphopantetheine is transferred from CoA to a specific serine of apo-ACP by AcpS. This modification is essential for activity because fatty acids are bound in thioester linkage to the sulfhydryl of the prosthetic group.

The protein resides in the cytoplasm. It participates in lipid metabolism; fatty acid biosynthesis. Its function is as follows. Carrier of the growing fatty acid chain in fatty acid biosynthesis. The sequence is that of Acyl carrier protein from Caulobacter vibrioides (strain ATCC 19089 / CIP 103742 / CB 15) (Caulobacter crescentus).